A 218-amino-acid polypeptide reads, in one-letter code: Octanoyltransferase (218 aa).

Positions 31–206 constitute a BPL/LPL catalytic domain; it reads REAADEVWLV…QLVKHLDYAE (176 aa). Substrate contacts are provided by residues 70-77, 137-139, and 150-152; these read RGGQVTYH, SLG, and GLA. Cys168 acts as the Acyl-thioester intermediate in catalysis.

The protein belongs to the LipB family.

It is found in the cytoplasm. It catalyses the reaction octanoyl-[ACP] + L-lysyl-[protein] = N(6)-octanoyl-L-lysyl-[protein] + holo-[ACP] + H(+). Its pathway is protein modification; protein lipoylation via endogenous pathway; protein N(6)-(lipoyl)lysine from octanoyl-[acyl-carrier-protein]: step 1/2. Its function is as follows. Catalyzes the transfer of endogenously produced octanoic acid from octanoyl-acyl-carrier-protein onto the lipoyl domains of lipoate-dependent enzymes. Lipoyl-ACP can also act as a substrate although octanoyl-ACP is likely to be the physiological substrate. The protein is Octanoyltransferase of Pseudomonas syringae pv. syringae (strain B728a).